The primary structure comprises 209 residues: Imidazole glycerol phosphate synthase subunit HisH (209 aa).

The 205-residue stretch at 1–205 (MIAIIDYGMG…KGVVETWKSS (205 aa)) folds into the Glutamine amidotransferase type-1 domain. Cysteine 79 functions as the Nucleophile in the catalytic mechanism. Active-site residues include histidine 180 and glutamate 182.

In terms of assembly, heterodimer of HisH and HisF.

The protein localises to the cytoplasm. It catalyses the reaction 5-[(5-phospho-1-deoxy-D-ribulos-1-ylimino)methylamino]-1-(5-phospho-beta-D-ribosyl)imidazole-4-carboxamide + L-glutamine = D-erythro-1-(imidazol-4-yl)glycerol 3-phosphate + 5-amino-1-(5-phospho-beta-D-ribosyl)imidazole-4-carboxamide + L-glutamate + H(+). The catalysed reaction is L-glutamine + H2O = L-glutamate + NH4(+). Its pathway is amino-acid biosynthesis; L-histidine biosynthesis; L-histidine from 5-phospho-alpha-D-ribose 1-diphosphate: step 5/9. IGPS catalyzes the conversion of PRFAR and glutamine to IGP, AICAR and glutamate. The HisH subunit catalyzes the hydrolysis of glutamine to glutamate and ammonia as part of the synthesis of IGP and AICAR. The resulting ammonia molecule is channeled to the active site of HisF. This is Imidazole glycerol phosphate synthase subunit HisH from Bacillus anthracis (strain A0248).